Reading from the N-terminus, the 49-residue chain is Lysozyme C (49 aa).

The 49-residue stretch at 1-49 (SKMKKCEFAKIAKEQHMDGYHGVSLADWVCLVNNESDFNTKAINRNKGI) folds into the C-type lysozyme domain. The active site involves E35.

The protein belongs to the glycosyl hydrolase 22 family. Monomer.

It localises to the secreted. The catalysed reaction is Hydrolysis of (1-&gt;4)-beta-linkages between N-acetylmuramic acid and N-acetyl-D-glucosamine residues in a peptidoglycan and between N-acetyl-D-glucosamine residues in chitodextrins.. Functionally, lysozymes have primarily a bacteriolytic function; those in tissues and body fluids are associated with the monocyte-macrophage system and enhance the activity of immunoagents. The sequence is that of Lysozyme C (LYZ) from Pseudocheirus peregrinus (Common ring-tailed possum).